We begin with the raw amino-acid sequence, 152 residues long: SsrA-binding protein (152 aa).

The protein belongs to the SmpB family.

It is found in the cytoplasm. In terms of biological role, required for rescue of stalled ribosomes mediated by trans-translation. Binds to transfer-messenger RNA (tmRNA), required for stable association of tmRNA with ribosomes. tmRNA and SmpB together mimic tRNA shape, replacing the anticodon stem-loop with SmpB. tmRNA is encoded by the ssrA gene; the 2 termini fold to resemble tRNA(Ala) and it encodes a 'tag peptide', a short internal open reading frame. During trans-translation Ala-aminoacylated tmRNA acts like a tRNA, entering the A-site of stalled ribosomes, displacing the stalled mRNA. The ribosome then switches to translate the ORF on the tmRNA; the nascent peptide is terminated with the 'tag peptide' encoded by the tmRNA and targeted for degradation. The ribosome is freed to recommence translation, which seems to be the essential function of trans-translation. The chain is SsrA-binding protein from Gloeobacter violaceus (strain ATCC 29082 / PCC 7421).